A 205-amino-acid polypeptide reads, in one-letter code: Cytochrome c biogenesis ATP-binding export protein CcmA 2 (205 aa).

In terms of domain architecture, ABC transporter spans L2 to L205. G34–T41 is an ATP binding site.

This sequence belongs to the ABC transporter superfamily. CcmA exporter (TC 3.A.1.107) family. As to quaternary structure, the complex is composed of two ATP-binding proteins (CcmA) and two transmembrane proteins (CcmB).

It localises to the cell inner membrane. It catalyses the reaction heme b(in) + ATP + H2O = heme b(out) + ADP + phosphate + H(+). Part of the ABC transporter complex CcmAB involved in the biogenesis of c-type cytochromes; once thought to export heme, this seems not to be the case, but its exact role is uncertain. Responsible for energy coupling to the transport system. The chain is Cytochrome c biogenesis ATP-binding export protein CcmA 2 from Salmonella typhimurium (strain LT2 / SGSC1412 / ATCC 700720).